The chain runs to 267 residues: RWD domain-containing protein 3 (267 aa).

The RWD domain maps to 7 to 114 (EELSVLAAIF…LWIQQNLRHI (108 aa)). Interaction with UBE2I/UBC9 regions lie at residues 13–15 (AAI) and 100–102 (VHE).

In terms of assembly, isoform 1 and isoform 2 interact with UBE2I/UBC9. Isoform 1 shows a greater interaction with NFKBIA and HIF1A as compared to isoform 2. Isoform 2 interacts with NCOA2 and NR3C1. As to expression, isoform 1 and isoform 2 are expressed in glioma tumors (at protein level). Expressed in a wide number of tissues with highest expression in cerebellum, pituitary, heart, kidney, liver, stomach, pancreas, prostate and spleen. Low levels in thalamus, spinal cord, esophagus, thymus, lung and peripheral blood leukocytes. A higher level expression seen in pituitary tumors as compared to the pituitary gland.

The protein localises to the nucleus. Its subcellular location is the cytoplasm. In terms of biological role, enhancer of SUMO conjugation. Via its interaction with UBE2I/UBC9, increases SUMO conjugation to proteins by promoting the binding of E1 and E2 enzymes, thioester linkage between SUMO and UBE2I/UBC9 and transfer of SUMO to specific target proteins which include HIF1A, PIAS, NFKBIA, NR3C1 and TOP1. Isoform 1 and isoform 2 positively regulate the NF-kappa-B signaling pathway by enhancing the sumoylation of NF-kappa-B inhibitor alpha (NFKBIA), promoting its stabilization which consequently leads to an increased inhibition of NF-kappa-B transcriptional activity. Isoform 1 and isoform 2 negatively regulate the hypoxia-inducible factor-1 alpha (HIF1A) signaling pathway by increasing the sumoylation of HIF1A, promoting its stabilization, transcriptional activity and the expression of its target gene VEGFA during hypoxia. Isoform 2 promotes the sumoylation and transcriptional activity of the glucocorticoid receptor NR3C1 and enhances the interaction of SUMO1 and NR3C1 with UBE2I/UBC9. Has no effect on ubiquitination. The polypeptide is RWD domain-containing protein 3 (RWDD3) (Homo sapiens (Human)).